The following is a 253-amino-acid chain: 5'-nucleotidase SurE (253 aa).

A divalent metal cation-binding residues include D8, D9, S39, and N91.

It belongs to the SurE nucleotidase family. It depends on a divalent metal cation as a cofactor.

It localises to the cytoplasm. The enzyme catalyses a ribonucleoside 5'-phosphate + H2O = a ribonucleoside + phosphate. Nucleotidase that shows phosphatase activity on nucleoside 5'-monophosphates. The chain is 5'-nucleotidase SurE from Albidiferax ferrireducens (strain ATCC BAA-621 / DSM 15236 / T118) (Rhodoferax ferrireducens).